A 356-amino-acid polypeptide reads, in one-letter code: Dual-specificity RNA methyltransferase RlmN (356 aa).

The active-site Proton acceptor is Glu-89. The Radical SAM core domain maps to 108 to 341 (SHARYTICVS…CTIRESKGLD (234 aa)). A disulfide bridge connects residues Cys-115 and Cys-346. Cys-122, Cys-126, and Cys-129 together coordinate [4Fe-4S] cluster. S-adenosyl-L-methionine contacts are provided by residues 172-173 (GE), Ser-204, 227-229 (SLH), and Asn-303. Cys-346 acts as the S-methylcysteine intermediate in catalysis.

This sequence belongs to the radical SAM superfamily. RlmN family. The cofactor is [4Fe-4S] cluster.

The protein resides in the cytoplasm. The catalysed reaction is adenosine(2503) in 23S rRNA + 2 reduced [2Fe-2S]-[ferredoxin] + 2 S-adenosyl-L-methionine = 2-methyladenosine(2503) in 23S rRNA + 5'-deoxyadenosine + L-methionine + 2 oxidized [2Fe-2S]-[ferredoxin] + S-adenosyl-L-homocysteine. The enzyme catalyses adenosine(37) in tRNA + 2 reduced [2Fe-2S]-[ferredoxin] + 2 S-adenosyl-L-methionine = 2-methyladenosine(37) in tRNA + 5'-deoxyadenosine + L-methionine + 2 oxidized [2Fe-2S]-[ferredoxin] + S-adenosyl-L-homocysteine. Functionally, specifically methylates position 2 of adenine 2503 in 23S rRNA and position 2 of adenine 37 in tRNAs. m2A2503 modification seems to play a crucial role in the proofreading step occurring at the peptidyl transferase center and thus would serve to optimize ribosomal fidelity. This Campylobacter jejuni subsp. jejuni serotype O:23/36 (strain 81-176) protein is Dual-specificity RNA methyltransferase RlmN.